The chain runs to 361 residues: GDP-mannose 4,6 dehydratase 1 (361 aa).

NADP(+) is bound by residues 23–28 (GITGQD), 79–80 (DL), 101–105 (LAAQS), and Y116. S150 is an active-site residue. Active-site nucleophile residues include E152 and Y173. K177, H203, and R208 together coordinate NADP(+).

Belongs to the NAD(P)-dependent epimerase/dehydratase family. GDP-mannose 4,6-dehydratase subfamily. Homotetramer. Requires NADP(+) as cofactor. As to expression, expressed in roots,stipules and pollen just before anthesis. Primarily localized to the root meristem and columella root cap. Not expressed in emerging lateral roots.

It carries out the reaction GDP-alpha-D-mannose = GDP-4-dehydro-alpha-D-rhamnose + H2O. Its pathway is nucleotide-sugar biosynthesis; GDP-L-fucose biosynthesis via de novo pathway; GDP-L-fucose from GDP-alpha-D-mannose: step 1/2. Its function is as follows. Catalyzes the conversion of GDP-D-mannose to GDP-4-dehydro-6-deoxy-D-mannose. This Arabidopsis thaliana (Mouse-ear cress) protein is GDP-mannose 4,6 dehydratase 1 (GMD1).